We begin with the raw amino-acid sequence, 209 residues long: Glutathione S-transferase 1, isoform C (209 aa).

A GST N-terminal domain is found at 1–80; sequence MDFYYLPGSA…YLAEKYGKDD (80 aa). Glutathione contacts are provided by residues Ser9, 50-52, and 64-66; these read HCI and ESR. The 122-residue stretch at 86–207 folds into the GST C-terminal domain; that stretch reads DPQKRAVVNQ…AGIEEFKKYF (122 aa).

This sequence belongs to the GST superfamily. Theta family. As to quaternary structure, homodimer.

The enzyme catalyses RX + glutathione = an S-substituted glutathione + a halide anion + H(+). It carries out the reaction 1,1,1-trichloro-2,2-bis(4-chlorophenyl)ethane = 1,1-dichloro-2,2-bis(4-chlorophenyl)ethylene + chloride + H(+). In terms of biological role, conjugation of reduced glutathione to a wide number of exogenous and endogenous hydrophobic electrophiles. Has DDT dehydrochlorinase activity. This Anopheles gambiae (African malaria mosquito) protein is Glutathione S-transferase 1, isoform C (GstD1).